Consider the following 581-residue polypeptide: Nicotinic acid-CoA ligase pyr1 (581 aa).

AMP is bound at residue 204–215 (MFLTSGTSGLPK). The AMP-binding stretch occupies residues 477-555 (EIEGILLKDP…DEIPRTGIGK (79 aa)).

The protein belongs to the ATP-dependent AMP-binding enzyme family.

It catalyses the reaction nicotinate + ATP + CoA = nicotinyl-CoA + AMP + diphosphate. The protein operates within secondary metabolite biosynthesis; terpenoid biosynthesis. Functionally, nicotinic acid-CoA ligase; part of the gene cluster that mediates the biosynthesis of pyripyropene A, a specific human acyl-coenzyme A:cholesterol acyltransferase 2 inhibitor. The first step of the pathway is the synthesis of nicotinyl-CoA from nicotinic acid by the nicotinic acid-CoA ligase pyr1. Nicotinyl-CoA is then a substrate of polyketide synthase pyr2 to produce 4-hydroxy-6-(3-pyridinyl)-2H-pyran-2-one (HPPO) which is further prenylated by the polyprenyl transferase pyr6 to yield farnesyl-HPPO. The next steps consist of an epoxidation of farnesyl-HPPO to epoxyfarnesyl-HPPO by FAD-dependent monooxygenase pyr5 and a cyclization of the terpenoid portion by the terpene cyclase pyr4 to yield deacetyl-pyripyropene E. The 2 cytochrome P450 monooxygenases pyr3 and pyr9, and the 2 acetyltransferases pyr7 and pyr8 are involved in the conversion of deacetyl-pyripyropene E into pyripyropene A through several cycles of oxidation and acetylation steps. Pyr7 acetylates deacetyl-pyripyropene E to pyripyropene E which is oxidized to 11-deacetyl-pyripyropene O by pyr3, which is in turn acetylated into pyripyropene O by pyr8. Pyripyropene O is then oxidized to deacetyl-pyripyropene A by pyr9. Deacetyl-pyripyropene A is finally acetylated to pyripyropene A by pyr8. In Aspergillus fumigatus (strain ATCC MYA-4609 / CBS 101355 / FGSC A1100 / Af293) (Neosartorya fumigata), this protein is Nicotinic acid-CoA ligase pyr1.